Here is a 381-residue protein sequence, read N- to C-terminus: MSETSCSFFIEKEFQDGQLENVSAGLSSSYKDKGALMAFRGIPISELTNHGILQALTAETNGWQPGVVSEEVLRAQEEWEVVDTIHPDIESGVHCQQPGQLISFNEALEHFQSVDLSSFKKRIQPTIQRTGLAALRHCLFGPPKLHQGLREERDLVLTIAQCGLDSQNPTHGRVLQTIYKKLTGSKFDCALHGDHWEDLGFQGANPATDLRGAGFLALLHLLYLVMDSKTFLMAQEIFRLSHHHIQQFPFCLMSVNITRIAIQALREECLSRECNRRQKVIPVVNSFYAATFLHLARVWRTQQKTILDSGFVLKDLEALAKKSPKRLLKTLDDYLAQVSKGQTSLLEAHKRPGSQGPHSRDLTFTGVCDLQSHSFESAGLI.

Residues 170–324 form the ELMO domain; that stretch reads THGRVLQTIY…DLEALAKKSP (155 aa).

As to expression, both isoform 1 and isoform 2 are widely expressed.

The protein resides in the cell projection. Its subcellular location is the stereocilium. It localises to the kinocilium. It is found in the cytoplasm. The protein localises to the cytoskeleton. Its function is as follows. Acts as a GTPase-activating protein (GAP) for ARL2 with low specific activity. The chain is ELMO domain-containing protein 3 (Elmod3) from Mus musculus (Mouse).